The sequence spans 245 residues: tRNA pseudouridine synthase A (245 aa).

The active-site Nucleophile is the D52. Substrate is bound at residue Y111.

This sequence belongs to the tRNA pseudouridine synthase TruA family. As to quaternary structure, homodimer.

The enzyme catalyses uridine(38/39/40) in tRNA = pseudouridine(38/39/40) in tRNA. In terms of biological role, formation of pseudouridine at positions 38, 39 and 40 in the anticodon stem and loop of transfer RNAs. This is tRNA pseudouridine synthase A from Wolbachia pipientis subsp. Culex pipiens (strain wPip).